We begin with the raw amino-acid sequence, 1366 residues long: DNA-directed RNA polymerase subunit beta' (1366 aa).

The segment covering 1-23 (MTSSKPKKSSRVRKTSKNSKKNN) has biased composition (basic residues). Residues 1-25 (MTSSKPKKSSRVRKTSKNSKKNNKI) form a disordered region. 4 residues coordinate Zn(2+): cysteine 248, cysteine 315, cysteine 322, and cysteine 325. The interval 1290–1366 (DYTVDMPQSP…LQEEGLLSDE (77 aa)) is disordered. The segment covering 1295–1305 (MPQSPTVSSTA) has biased composition (polar residues). Positions 1354 to 1366 (LEGLQEEGLLSDE) are enriched in low complexity.

Belongs to the RNA polymerase beta' chain family. RpoC2 subfamily. In cyanobacteria the RNAP catalytic core is composed of 2 alpha, 1 beta, 1 beta', 1 gamma and 1 omega subunit. When a sigma factor is associated with the core the holoenzyme is formed, which can initiate transcription. The cofactor is Zn(2+).

It catalyses the reaction RNA(n) + a ribonucleoside 5'-triphosphate = RNA(n+1) + diphosphate. DNA-dependent RNA polymerase catalyzes the transcription of DNA into RNA using the four ribonucleoside triphosphates as substrates. The protein is DNA-directed RNA polymerase subunit beta' of Prochlorococcus marinus (strain MIT 9515).